The primary structure comprises 135 residues: MTPIYTIAAISLGASLGALARYGLGLALNAIFPPLPIGTLAANLIAAYVVGVTIAYVGTVPGLSPLWRLFMITGLAGGLSTFSTFTAELFSLLREGRLGMSAGMLGLHVGGSLALLMLGMLTIGLLRKSSLGIAE.

4 consecutive transmembrane segments (helical) span residues 7 to 27 (IAAI…LGLA), 37 to 57 (IGTL…IAYV), 70 to 90 (FMIT…AELF), and 105 to 125 (LGLH…TIGL). Positions 77 and 80 each coordinate Na(+).

This sequence belongs to the fluoride channel Fluc/FEX (TC 1.A.43) family.

Its subcellular location is the cell inner membrane. The catalysed reaction is fluoride(in) = fluoride(out). Its activity is regulated as follows. Na(+) is not transported, but it plays an essential structural role and its presence is essential for fluoride channel function. Functionally, fluoride-specific ion channel. Important for reducing fluoride concentration in the cell, thus reducing its toxicity. The sequence is that of Fluoride-specific ion channel FluC from Xanthomonas oryzae pv. oryzae (strain MAFF 311018).